A 340-amino-acid polypeptide reads, in one-letter code: GTPase Obg (340 aa).

The Obg domain maps to 1-159 (MRFIDKAKIH…RWIELELKLI (159 aa)). Residues 160–331 (ADIGIIGFPN…LIKLIAEVYE (172 aa)) enclose the OBG-type G domain. Residues 166 to 173 (GFPNAGKS), 191 to 195 (FTTLT), 213 to 216 (DIPG), 283 to 286 (NKID), and 312 to 314 (SLV) each bind GTP. Serine 173 and threonine 193 together coordinate Mg(2+).

The protein belongs to the TRAFAC class OBG-HflX-like GTPase superfamily. OBG GTPase family. Monomer. Mg(2+) is required as a cofactor.

The protein localises to the cytoplasm. Its function is as follows. An essential GTPase which binds GTP, GDP and possibly (p)ppGpp with moderate affinity, with high nucleotide exchange rates and a fairly low GTP hydrolysis rate. Plays a role in control of the cell cycle, stress response, ribosome biogenesis and in those bacteria that undergo differentiation, in morphogenesis control. The polypeptide is GTPase Obg (Persephonella marina (strain DSM 14350 / EX-H1)).